The following is a 132-amino-acid chain: uncharacterized protein (132 aa).

The 71-residue stretch at 45–115 folds into the BIG2 domain; sequence VHMEKHKLKI…VVIVTTAEGK (71 aa).

The protein to B.anthracis BA1245.

This is an uncharacterized protein from Bacillus cereus (strain ATCC 14579 / DSM 31 / CCUG 7414 / JCM 2152 / NBRC 15305 / NCIMB 9373 / NCTC 2599 / NRRL B-3711).